A 607-amino-acid polypeptide reads, in one-letter code: MKRKLDANDVPVPTEGSDAIKENVTFASLGLDARLLQGIAKQNFQSPTLVQSKAIPLTLEGRDILARAKTGSGKTAAYLLPILHSILKRKELSSTQCTTALILVPTRELADQVYKTVESFTAFCAKDVRAVNLTQRVSDAVQRSLLADSPDIVIATPARASLNANTSALSLANLTHMVIDEADLVLSYGYDEDLQNVAKIMPKGVQTVLMSATLTSEVETLKGLFCRNPEVLKLEEAEDEGEGVSQFVVKCAEDEKFLLTYVIFKLKLIKGKCIIFVGDIDRCYRLKLFLEQFGTRSCILNSQLPVNSRIHVVEEFNKNVYDIIIASDEHEVLGDEDEPKSGDAEEVEADDADEEKEDAKDAKKETKQPSKKKQKTGKKDKEYGVSRGIDFKNVACVLNFDLPTSSKSYTHRIGRTARAGQTGMALSFVIPSEQYRKHKPTSIESAKNDEKVLAKIVKHQAKKGKEVKPYNFDMKQVDAFRYRMGDALRAVTSIAVQEAKTREIRQELMKSDKLKRHFEENPGDLYHLRHDGELRPARVQAHLKHVPDYLLPKEGKKGITGGDVGFVGMHKTTENRIRKARAANKAKGRGKGRKSDPLKTFKAKSKK.

The short motif at 24–52 is the Q motif element; the sequence is VTFASLGLDARLLQGIAKQNFQSPTLVQS. Residues 55-232 enclose the Helicase ATP-binding domain; sequence IPLTLEGRDI…GLFCRNPEVL (178 aa). 68-75 lines the ATP pocket; sequence AKTGSGKT. Residues 180–183 carry the DEAD box motif; the sequence is DEAD. The Helicase C-terminal domain maps to 243 to 475; sequence GVSQFVVKCA…EVKPYNFDMK (233 aa). Positions 332-343 are enriched in basic and acidic residues; it reads VLGDEDEPKSGD. 2 disordered regions span residues 332 to 380 and 573 to 607; these read VLGD…GKKD and TENR…KSKK. Over residues 344–356 the composition is skewed to acidic residues; that stretch reads AEEVEADDADEEK. A compositionally biased stretch (basic and acidic residues) spans 357-368; sequence EDAKDAKKETKQ. Basic residues predominate over residues 578-592; it reads RKARAANKAKGRGKG.

The protein belongs to the DEAD box helicase family. DDX56/DBP9 subfamily.

It is found in the nucleus. It localises to the nucleolus. The catalysed reaction is ATP + H2O = ADP + phosphate + H(+). In terms of biological role, ATP-binding RNA helicase involved in the biogenesis of 60S ribosomal subunits and is required for the normal formation of 25S and 5.8S rRNAs. The protein is ATP-dependent RNA helicase dbp9 (dbp9) of Botryotinia fuckeliana (strain B05.10) (Noble rot fungus).